The sequence spans 336 residues: tRNA pseudouridine synthase D (336 aa).

Asp84 (nucleophile) is an active-site residue. Residues 164 to 298 enclose the TRUD domain; sequence GVPNYFGEQR…TPSYRWLVGD (135 aa).

This sequence belongs to the pseudouridine synthase TruD family.

It carries out the reaction uridine(13) in tRNA = pseudouridine(13) in tRNA. Responsible for synthesis of pseudouridine from uracil-13 in transfer RNAs. The chain is tRNA pseudouridine synthase D from Cellvibrio japonicus (strain Ueda107) (Pseudomonas fluorescens subsp. cellulosa).